Here is a 396-residue protein sequence, read N- to C-terminus: 1-deoxy-D-xylulose 5-phosphate reductoisomerase (396 aa).

NADPH contacts are provided by T10, G11, S12, I13, N38, and N123. K124 is a binding site for 1-deoxy-D-xylulose 5-phosphate. E125 provides a ligand contact to NADPH. D149 is a Mn(2+) binding site. The 1-deoxy-D-xylulose 5-phosphate site is built by S150, E151, S185, and H208. E151 is a Mn(2+) binding site. An NADPH-binding site is contributed by G214. 4 residues coordinate 1-deoxy-D-xylulose 5-phosphate: S221, N226, K227, and E230. Mn(2+) is bound at residue E230.

Belongs to the DXR family. The cofactor is Mg(2+). Mn(2+) is required as a cofactor.

The catalysed reaction is 2-C-methyl-D-erythritol 4-phosphate + NADP(+) = 1-deoxy-D-xylulose 5-phosphate + NADPH + H(+). It functions in the pathway isoprenoid biosynthesis; isopentenyl diphosphate biosynthesis via DXP pathway; isopentenyl diphosphate from 1-deoxy-D-xylulose 5-phosphate: step 1/6. Its function is as follows. Catalyzes the NADPH-dependent rearrangement and reduction of 1-deoxy-D-xylulose-5-phosphate (DXP) to 2-C-methyl-D-erythritol 4-phosphate (MEP). This is 1-deoxy-D-xylulose 5-phosphate reductoisomerase from Shewanella piezotolerans (strain WP3 / JCM 13877).